Consider the following 268-residue polypeptide: 4-hydroxy-tetrahydrodipicolinate reductase (268 aa).

8–13 contributes to the NAD(+) binding site; the sequence is GAAGRM. Arginine 36 serves as a coordination point for NADP(+). Residues 99 to 101 and 123 to 126 each bind NAD(+); these read GTT and AANF. The Proton donor/acceptor role is filled by histidine 156. Histidine 157 contacts (S)-2,3,4,5-tetrahydrodipicolinate. Lysine 160 acts as the Proton donor in catalysis. 166 to 167 contacts (S)-2,3,4,5-tetrahydrodipicolinate; that stretch reads GT.

It belongs to the DapB family.

It is found in the cytoplasm. It carries out the reaction (S)-2,3,4,5-tetrahydrodipicolinate + NAD(+) + H2O = (2S,4S)-4-hydroxy-2,3,4,5-tetrahydrodipicolinate + NADH + H(+). The catalysed reaction is (S)-2,3,4,5-tetrahydrodipicolinate + NADP(+) + H2O = (2S,4S)-4-hydroxy-2,3,4,5-tetrahydrodipicolinate + NADPH + H(+). Its pathway is amino-acid biosynthesis; L-lysine biosynthesis via DAP pathway; (S)-tetrahydrodipicolinate from L-aspartate: step 4/4. In terms of biological role, catalyzes the conversion of 4-hydroxy-tetrahydrodipicolinate (HTPA) to tetrahydrodipicolinate. This is 4-hydroxy-tetrahydrodipicolinate reductase from Pseudomonas fluorescens (strain ATCC BAA-477 / NRRL B-23932 / Pf-5).